An 801-amino-acid polypeptide reads, in one-letter code: Heavy metal tolerance factor 1 (801 aa).

Residues 1–24 are Lumenal-facing; the sequence is MGFSPFLDECRAEGLWPIGPSCNK. The chain crosses the membrane as a helical span at residues 25 to 45; sequence IISFGVYTFFIVVNFIVLCIP. Residues 46–75 lie on the Cytoplasmic side of the membrane; sequence NSNSANNNYRRMTDDDASSTSKLTISKILS. The helical transmembrane segment at 76-96 threads the bilayer; sequence ICTIFAVICQSIFYFCFTFYF. At 97–101 the chain is on the lumenal side; it reads HPYTH. A helical membrane pass occupies residues 102–122; that stretch reads LLLAFCVSKLFFWILSLCSFS. Over 123-129 the chain is Cytoplasmic; sequence KWRNQPS. The chain crosses the membrane as a helical span at residues 130–150; sequence TPISLAFAFSAALLIHCIPLT. Topologically, residues 151-167 are lumenal; the sequence is DWKKYFEPTSKNRGDLT. A helical membrane pass occupies residues 168-188; sequence FYIIELALVTVVFFFTIVTGL. The Cytoplasmic portion of the chain corresponds to 189–226; sequence FNFSGCSSRESAWNNLSKKVVTVAPYIWPTKSISLQLR. Residues 227–247 form a helical membrane-spanning segment; that stretch reads VVFCLFLLIIGRLINVSLPIL. The region spanning 227 to 516 is the ABC transmembrane type-1 domain; sequence VVFCLFLLII…FGTIYRVIQK (290 aa). Topologically, residues 248–264 are lumenal; it reads SKWIVDELATPDTFQYS. A helical transmembrane segment spans residues 265-285; the sequence is LLFLATFLKFLQGNGAMGGFL. At 286–341 the chain is on the cytoplasmic side; that stretch reads NTVRTYLWIPIQQYTTRELEVELFKHLHSLSLRWHLSRKTGQVLRVMDRGTSSVNN. A helical transmembrane segment spans residues 342–364; sequence ILNYILFNVVPTIADIVIAVIFF. Residues 365–371 are Lumenal-facing; the sequence is FSAFNAY. A helical transmembrane segment spans residues 372–390; sequence FGLIVFGTMALYLTVTISI. The Cytoplasmic segment spans residues 391–461; that stretch reads TEWRTQYIRE…SLAFLNCLQN (71 aa). A helical transmembrane segment spans residues 462–482; it reads AIIGIGMIGGSVFVVYMIVHE. The Lumenal portion of the chain corresponds to 483–489; that stretch reads KTLTVGD. The chain crosses the membrane as a helical span at residues 490–510; the sequence is YVLFTTYLLQLYTPLNFFGTI. Topologically, residues 511-801 are cytoplasmic; that stretch reads YRVIQKAFVD…KSIELGEELP (291 aa). Residues 550-784 enclose the ABC transporter domain; sequence ISVKNLTFEY…QGTYASMWEA (235 aa). 583–590 serves as a coordination point for ATP; the sequence is GSSGSGKS.

The protein belongs to the ABC transporter superfamily. ABCB family. Heavy Metal importer (TC 3.A.1.210) subfamily. In terms of tissue distribution, expressed in coelomocytes, as well as in head and tail neurons, and in the intestinal cells.

It localises to the vacuole membrane. The protein resides in the early endosome. It is found in the late endosome. The protein localises to the recycling endosome. Functionally, may play a pivotal role in the detoxification of heavy metals such as cadmium but do not depend exclusively on phytochelatins (PC) synthesis. This chain is Heavy metal tolerance factor 1, found in Caenorhabditis elegans.